The chain runs to 406 residues: Paracaspase (406 aa).

Residues 193 to 374 form a caspase-like region; that stretch reads IGNSKYSQHR…TERKNNNIST (182 aa). Active-site residues include His-266 and Cys-311.

This sequence belongs to the peptidase C14B family.

Its function is as follows. Not required for DIF-induced autophagic cell death and necrotic cell death. This is Paracaspase (pcp) from Dictyostelium discoideum (Social amoeba).